The following is a 296-amino-acid chain: Urease accessory protein UreD (296 aa).

It belongs to the UreD family. In terms of assembly, ureD, UreF and UreG form a complex that acts as a GTP-hydrolysis-dependent molecular chaperone, activating the urease apoprotein by helping to assemble the nickel containing metallocenter of UreC. The UreE protein probably delivers the nickel.

It is found in the cytoplasm. In terms of biological role, required for maturation of urease via the functional incorporation of the urease nickel metallocenter. In Synechococcus sp. (strain CC9311), this protein is Urease accessory protein UreD.